The following is a 291-amino-acid chain: N-acetylmannosamine kinase (291 aa).

Residues 5–12 (AIDIGGTK) and 132–139 (GVGGGVVS) contribute to the ATP site. H156, C166, C168, and C173 together coordinate Zn(2+).

Belongs to the ROK (NagC/XylR) family. NanK subfamily. In terms of assembly, homodimer.

It carries out the reaction an N-acyl-D-mannosamine + ATP = an N-acyl-D-mannosamine 6-phosphate + ADP + H(+). Its pathway is amino-sugar metabolism; N-acetylneuraminate degradation; D-fructose 6-phosphate from N-acetylneuraminate: step 2/5. Functionally, catalyzes the phosphorylation of N-acetylmannosamine (ManNAc) to ManNAc-6-P. In Escherichia coli O127:H6 (strain E2348/69 / EPEC), this protein is N-acetylmannosamine kinase.